Consider the following 323-residue polypeptide: Elongation factor P--(R)-beta-lysine ligase (323 aa).

A substrate-binding site is contributed by 74–76 (SPE). Residues 98–100 (RNE) and Asn-107 contribute to the ATP site. Tyr-116 contacts substrate. Residue 242–243 (EL) coordinates ATP. Position 249 (Glu-249) interacts with substrate. Residue Gly-298 coordinates ATP.

This sequence belongs to the class-II aminoacyl-tRNA synthetase family. EpmA subfamily. In terms of assembly, homodimer.

The enzyme catalyses D-beta-lysine + L-lysyl-[protein] + ATP = N(6)-((3R)-3,6-diaminohexanoyl)-L-lysyl-[protein] + AMP + diphosphate + H(+). Its function is as follows. With EpmB is involved in the beta-lysylation step of the post-translational modification of translation elongation factor P (EF-P). Catalyzes the ATP-dependent activation of (R)-beta-lysine produced by EpmB, forming a lysyl-adenylate, from which the beta-lysyl moiety is then transferred to the epsilon-amino group of a conserved specific lysine residue in EF-P. The polypeptide is Elongation factor P--(R)-beta-lysine ligase (Vibrio campbellii (strain ATCC BAA-1116)).